Consider the following 557-residue polypeptide: CTP synthase (557 aa).

The tract at residues 1–267 (MAKYIFVTGG…GAYLTQRLGL (267 aa)) is amidoligase domain. Ser13 provides a ligand contact to CTP. Ser13 is a binding site for UTP. Residue 14 to 19 (SVGKGI) coordinates ATP. Tyr54 is a binding site for L-glutamine. Asp71 lines the ATP pocket. Residues Asp71 and Glu141 each coordinate Mg(2+). CTP is bound by residues 148-150 (DIE), 188-193 (KTKPTQ), and Lys224. UTP-binding positions include 188 to 193 (KTKPTQ) and Lys224. The Glutamine amidotransferase type-1 domain maps to 292 to 535 (AIALVGKYVE…VAAAAKTFRE (244 aa)). Residue Gly354 coordinates L-glutamine. The active-site Nucleophile; for glutamine hydrolysis is the Cys381. Residues 382 to 385 (LGMQ), Glu406, and Arg463 contribute to the L-glutamine site. Catalysis depends on residues His508 and Glu510. The segment at 536–557 (GDQRPLPLEQNGAVTEHEPHSR) is disordered.

The protein belongs to the CTP synthase family. As to quaternary structure, homotetramer.

It catalyses the reaction UTP + L-glutamine + ATP + H2O = CTP + L-glutamate + ADP + phosphate + 2 H(+). It carries out the reaction L-glutamine + H2O = L-glutamate + NH4(+). The catalysed reaction is UTP + NH4(+) + ATP = CTP + ADP + phosphate + 2 H(+). It participates in pyrimidine metabolism; CTP biosynthesis via de novo pathway; CTP from UDP: step 2/2. Allosterically activated by GTP, when glutamine is the substrate; GTP has no effect on the reaction when ammonia is the substrate. The allosteric effector GTP functions by stabilizing the protein conformation that binds the tetrahedral intermediate(s) formed during glutamine hydrolysis. Inhibited by the product CTP, via allosteric rather than competitive inhibition. Its function is as follows. Catalyzes the ATP-dependent amination of UTP to CTP with either L-glutamine or ammonia as the source of nitrogen. Regulates intracellular CTP levels through interactions with the four ribonucleotide triphosphates. This chain is CTP synthase, found in Roseiflexus sp. (strain RS-1).